Reading from the N-terminus, the 185-residue chain is ATP-dependent protease subunit HslV (185 aa).

The active site involves Thr12. Na(+)-binding residues include Ser168, Cys171, and Thr174.

The protein belongs to the peptidase T1B family. HslV subfamily. As to quaternary structure, a double ring-shaped homohexamer of HslV is capped on each side by a ring-shaped HslU homohexamer. The assembly of the HslU/HslV complex is dependent on binding of ATP.

It localises to the cytoplasm. The enzyme catalyses ATP-dependent cleavage of peptide bonds with broad specificity.. Its activity is regulated as follows. Allosterically activated by HslU binding. Its function is as follows. Protease subunit of a proteasome-like degradation complex believed to be a general protein degrading machinery. The polypeptide is ATP-dependent protease subunit HslV (Jannaschia sp. (strain CCS1)).